The following is a 438-amino-acid chain: Dihydrolipoyllysine-residue acetyltransferase component of pyruvate dehydrogenase complex (438 aa).

One can recognise a Lipoyl-binding domain in the interval 1–76; that stretch reads MFKVKFADIG…KVGDVVMEIE (76 aa). Lys42 carries the N6-lipoyllysine modification. The Peripheral subunit-binding (PSBD) domain maps to 132–169; the sequence is KATPLARKVAADLNIDLSLVTPTGPNQRILVADIKNHQ. Residues 172–181 show a composition bias toward polar residues; that stretch reads STQLASQPIS. The tract at residues 172–192 is disordered; the sequence is STQLASQPISQPAPTPSPSAH. Residue His411 is part of the active site.

The protein belongs to the 2-oxoacid dehydrogenase family. In terms of assembly, forms a 24-polypeptide structural core with octahedral symmetry. Requires (R)-lipoate as cofactor.

It carries out the reaction N(6)-[(R)-dihydrolipoyl]-L-lysyl-[protein] + acetyl-CoA = N(6)-[(R)-S(8)-acetyldihydrolipoyl]-L-lysyl-[protein] + CoA. The pyruvate dehydrogenase complex catalyzes the overall conversion of pyruvate to acetyl-CoA and CO(2). It contains multiple copies of three enzymatic components: pyruvate dehydrogenase (E1), dihydrolipoamide acetyltransferase (E2) and lipoamide dehydrogenase (E3). In Mycoplasma capricolum subsp. capricolum (strain California kid / ATCC 27343 / NCTC 10154), this protein is Dihydrolipoyllysine-residue acetyltransferase component of pyruvate dehydrogenase complex (pdhC).